The chain runs to 106 residues: Thiosulfate sulfurtransferase GlpE (106 aa).

A Rhodanese domain is found at 17-105 (EQNEARLVDI…SYRAELPVIA (89 aa)). The active-site Cysteine persulfide intermediate is the Cys65.

It belongs to the GlpE family.

Its subcellular location is the cytoplasm. It carries out the reaction thiosulfate + hydrogen cyanide = thiocyanate + sulfite + 2 H(+). The enzyme catalyses thiosulfate + [thioredoxin]-dithiol = [thioredoxin]-disulfide + hydrogen sulfide + sulfite + 2 H(+). In terms of biological role, transferase that catalyzes the transfer of sulfur from thiosulfate to thiophilic acceptors such as cyanide or dithiols. May function in a CysM-independent thiosulfate assimilation pathway by catalyzing the conversion of thiosulfate to sulfite, which can then be used for L-cysteine biosynthesis. This chain is Thiosulfate sulfurtransferase GlpE, found in Vibrio atlanticus (strain LGP32) (Vibrio splendidus (strain Mel32)).